Here is a 251-residue protein sequence, read N- to C-terminus: CDP-diacylglycerol pyrophosphatase (251 aa).

A helical transmembrane segment spans residues 4–24; it reads AGLLFLVMIVIAVVASGIGYW.

It belongs to the Cdh family.

It localises to the cell inner membrane. It carries out the reaction a CDP-1,2-diacyl-sn-glycerol + H2O = a 1,2-diacyl-sn-glycero-3-phosphate + CMP + 2 H(+). It participates in phospholipid metabolism; CDP-diacylglycerol degradation; phosphatidate from CDP-diacylglycerol: step 1/1. In Escherichia coli O8 (strain IAI1), this protein is CDP-diacylglycerol pyrophosphatase.